We begin with the raw amino-acid sequence, 124 residues long: Small ribosomal subunit protein uS13 (124 aa).

The interval 94 to 124 (GLPLRGQRTKNNSRTRKGRRKTVANKKKATK) is disordered. A compositionally biased stretch (basic residues) spans 100 to 124 (QRTKNNSRTRKGRRKTVANKKKATK).

It belongs to the universal ribosomal protein uS13 family. As to quaternary structure, part of the 30S ribosomal subunit. Forms a loose heterodimer with protein S19. Forms two bridges to the 50S subunit in the 70S ribosome.

In terms of biological role, located at the top of the head of the 30S subunit, it contacts several helices of the 16S rRNA. In the 70S ribosome it contacts the 23S rRNA (bridge B1a) and protein L5 of the 50S subunit (bridge B1b), connecting the 2 subunits; these bridges are implicated in subunit movement. Contacts the tRNAs in the A and P-sites. This is Small ribosomal subunit protein uS13 from Christiangramia forsetii (strain DSM 17595 / CGMCC 1.15422 / KT0803) (Gramella forsetii).